A 132-amino-acid polypeptide reads, in one-letter code: Small ribosomal subunit protein uS8 (132 aa).

The protein belongs to the universal ribosomal protein uS8 family. Part of the 30S ribosomal subunit. Contacts proteins S5 and S12.

In terms of biological role, one of the primary rRNA binding proteins, it binds directly to 16S rRNA central domain where it helps coordinate assembly of the platform of the 30S subunit. In Bacillus anthracis (strain A0248), this protein is Small ribosomal subunit protein uS8.